We begin with the raw amino-acid sequence, 330 residues long: Membrane-associated protein VIPP1, chloroplastic (330 aa).

The N-terminal 64 residues, Met-1–Arg-64, are a transit peptide targeting the chloroplast. Coiled coils occupy residues Ser-124–Ile-259 and Lys-312–Asp-329. The tract at residues Leu-287 to Lys-312 is disordered.

Belongs to the PspA/Vipp/IM30 family. In terms of assembly, homomultimer. Complex formation involves interaction via the central alpha-helical domain (71-286).

It localises to the plastid. The protein resides in the chloroplast inner membrane. Its subcellular location is the chloroplast thylakoid membrane. Its function is as follows. Required for plastid vesicle formation and thylakoid membrane biogenesis, but not for functional assembly of thylakoid protein complexes. The protein is Membrane-associated protein VIPP1, chloroplastic of Arabidopsis thaliana (Mouse-ear cress).